The chain runs to 130 residues: uncharacterized protein (130 aa).

This is an uncharacterized protein from Enterobacteria phage T4 (Bacteriophage T4).